The following is a 389-amino-acid chain: Succinate--CoA ligase [ADP-forming] subunit beta (389 aa).

Positions 9–236 constitute an ATP-grasp domain; that stretch reads KELFAKHNVP…KDATDPLELK (228 aa). ATP is bound by residues lysine 45, 52 to 54, serine 94, and glutamate 99; that span reads GRG. Positions 191 and 205 each coordinate Mg(2+). Substrate-binding positions include asparagine 256 and 318-320; that span reads GIT.

Belongs to the succinate/malate CoA ligase beta subunit family. As to quaternary structure, heterotetramer of two alpha and two beta subunits. Mg(2+) is required as a cofactor.

It catalyses the reaction succinate + ATP + CoA = succinyl-CoA + ADP + phosphate. It carries out the reaction GTP + succinate + CoA = succinyl-CoA + GDP + phosphate. The protein operates within carbohydrate metabolism; tricarboxylic acid cycle; succinate from succinyl-CoA (ligase route): step 1/1. Its function is as follows. Succinyl-CoA synthetase functions in the citric acid cycle (TCA), coupling the hydrolysis of succinyl-CoA to the synthesis of either ATP or GTP and thus represents the only step of substrate-level phosphorylation in the TCA. The beta subunit provides nucleotide specificity of the enzyme and binds the substrate succinate, while the binding sites for coenzyme A and phosphate are found in the alpha subunit. This chain is Succinate--CoA ligase [ADP-forming] subunit beta, found in Mycobacteroides abscessus (strain ATCC 19977 / DSM 44196 / CCUG 20993 / CIP 104536 / JCM 13569 / NCTC 13031 / TMC 1543 / L948) (Mycobacterium abscessus).